A 460-amino-acid polypeptide reads, in one-letter code: Bifunctional protein GlmU (460 aa).

Residues 1–229 (MTNYAIILAA…FNESLGVNDR (229 aa)) are pyrophosphorylase. UDP-N-acetyl-alpha-D-glucosamine-binding positions include 8-11 (LAAG), K22, Q72, and 77-78 (GT). D102 is a binding site for Mg(2+). UDP-N-acetyl-alpha-D-glucosamine-binding residues include G139, E154, N169, and N227. N227 provides a ligand contact to Mg(2+). The tract at residues 230–250 (VALAIAETVMRQRITQKHMVN) is linker. The segment at 251-460 (GVTFQNPETV…RLAHHPSRSK (210 aa)) is N-acetyltransferase. Positions 332 and 350 each coordinate UDP-N-acetyl-alpha-D-glucosamine. The Proton acceptor role is filled by H362. Y365 and N376 together coordinate UDP-N-acetyl-alpha-D-glucosamine. Acetyl-CoA is bound by residues A379, 385-386 (NY), S404, A422, and R439.

It in the N-terminal section; belongs to the N-acetylglucosamine-1-phosphate uridyltransferase family. This sequence in the C-terminal section; belongs to the transferase hexapeptide repeat family. Homotrimer. Mg(2+) is required as a cofactor.

The protein resides in the cytoplasm. The enzyme catalyses alpha-D-glucosamine 1-phosphate + acetyl-CoA = N-acetyl-alpha-D-glucosamine 1-phosphate + CoA + H(+). It catalyses the reaction N-acetyl-alpha-D-glucosamine 1-phosphate + UTP + H(+) = UDP-N-acetyl-alpha-D-glucosamine + diphosphate. The protein operates within nucleotide-sugar biosynthesis; UDP-N-acetyl-alpha-D-glucosamine biosynthesis; N-acetyl-alpha-D-glucosamine 1-phosphate from alpha-D-glucosamine 6-phosphate (route II): step 2/2. It functions in the pathway nucleotide-sugar biosynthesis; UDP-N-acetyl-alpha-D-glucosamine biosynthesis; UDP-N-acetyl-alpha-D-glucosamine from N-acetyl-alpha-D-glucosamine 1-phosphate: step 1/1. Its pathway is bacterial outer membrane biogenesis; LPS lipid A biosynthesis. Catalyzes the last two sequential reactions in the de novo biosynthetic pathway for UDP-N-acetylglucosamine (UDP-GlcNAc). The C-terminal domain catalyzes the transfer of acetyl group from acetyl coenzyme A to glucosamine-1-phosphate (GlcN-1-P) to produce N-acetylglucosamine-1-phosphate (GlcNAc-1-P), which is converted into UDP-GlcNAc by the transfer of uridine 5-monophosphate (from uridine 5-triphosphate), a reaction catalyzed by the N-terminal domain. The chain is Bifunctional protein GlmU from Streptococcus pyogenes serotype M1.